The chain runs to 208 residues: Ribosomal RNA large subunit methyltransferase E (208 aa).

Positions 61, 63, 81, 97, and 122 each coordinate S-adenosyl-L-methionine. Lysine 162 (proton acceptor) is an active-site residue.

This sequence belongs to the class I-like SAM-binding methyltransferase superfamily. RNA methyltransferase RlmE family.

It is found in the cytoplasm. The catalysed reaction is uridine(2552) in 23S rRNA + S-adenosyl-L-methionine = 2'-O-methyluridine(2552) in 23S rRNA + S-adenosyl-L-homocysteine + H(+). In terms of biological role, specifically methylates the uridine in position 2552 of 23S rRNA at the 2'-O position of the ribose in the fully assembled 50S ribosomal subunit. The polypeptide is Ribosomal RNA large subunit methyltransferase E (Pseudomonas entomophila (strain L48)).